The sequence spans 199 residues: Adenylyl-sulfate kinase (199 aa).

Positions 1–21 (MSQSSNITWHDSEVTKSDRQQ) are disordered. Residues 10-19 (HDSEVTKSDR) are compositionally biased toward basic and acidic residues. Position 34-41 (34-41 (GLSGSGKS)) interacts with ATP. The active-site Phosphoserine intermediate is Ser-108.

The protein belongs to the APS kinase family.

The enzyme catalyses adenosine 5'-phosphosulfate + ATP = 3'-phosphoadenylyl sulfate + ADP + H(+). It functions in the pathway sulfur metabolism; hydrogen sulfide biosynthesis; sulfite from sulfate: step 2/3. Its function is as follows. Catalyzes the synthesis of activated sulfate. The protein is Adenylyl-sulfate kinase of Staphylococcus haemolyticus (strain JCSC1435).